The primary structure comprises 348 residues: Fructose-1,6-bisphosphatase class 1 (348 aa).

Residues E104, D126, L128, and D129 each coordinate Mg(2+). Substrate is bound by residues 129-132, N221, Y249, and K279; that span reads DGSS. E285 contributes to the Mg(2+) binding site.

This sequence belongs to the FBPase class 1 family. In terms of assembly, homotetramer. Mg(2+) serves as cofactor.

The protein resides in the cytoplasm. The enzyme catalyses beta-D-fructose 1,6-bisphosphate + H2O = beta-D-fructose 6-phosphate + phosphate. It functions in the pathway carbohydrate biosynthesis; Calvin cycle. The sequence is that of Fructose-1,6-bisphosphatase class 1 from Thermosynechococcus vestitus (strain NIES-2133 / IAM M-273 / BP-1).